A 196-amino-acid polypeptide reads, in one-letter code: Probable peptidyl-prolyl cis-trans isomerase (196 aa).

The first 26 residues, 1–26 (MSFIRSALAAAAFVALSIGAVQTASA), serve as a signal peptide directing secretion. Positions 29–194 (PENTVILKLK…KIIKATIEAD (166 aa)) constitute a PPIase cyclophilin-type domain.

It belongs to the cyclophilin-type PPIase family.

It is found in the periplasm. The enzyme catalyses [protein]-peptidylproline (omega=180) = [protein]-peptidylproline (omega=0). Its function is as follows. PPIases accelerate the folding of proteins. It catalyzes the cis-trans isomerization of proline imidic peptide bonds in oligopeptides. The chain is Probable peptidyl-prolyl cis-trans isomerase (ppi) from Brucella abortus (strain 2308).